A 201-amino-acid polypeptide reads, in one-letter code: Probable quinol oxidase subunit 3 (201 aa).

The next 5 helical transmembrane spans lie at 20–40 (LGFWIFLTAEFSLFGTLFATL), 62–82 (LVLIMTFALLISSYTCGISIY), 91–111 (LMMFWMILTVLLGLVFVGFEI), 133–153 (FFILLGTHGAHVSLGIGWIIC), and 172–192 (FIVSLYWHFLDVVWIFIFTAV).

This sequence belongs to the cytochrome c oxidase subunit 3 family.

It is found in the cell membrane. The enzyme catalyses 2 a quinol + O2 = 2 a quinone + 2 H2O. Catalyzes quinol oxidation with the concomitant reduction of oxygen to water. The protein is Probable quinol oxidase subunit 3 (qoxC) of Staphylococcus haemolyticus (strain JCSC1435).